A 449-amino-acid polypeptide reads, in one-letter code: MDSDDLQVFQNELICCICVNYFIDPVTIDCGHSFCRPCLCLCSEEGRAPMRCPSCRKTSEKPNFNTNLVLKKLSSLARQTRPQNINSSDNICVLHEETKELFCEADKRLLCGPCSESPEHMAHSHSPIGWAAEECREKLIKEMDYLWEINQETRNNLNQETSTFHSLKDYVSVRKRIITIQYQKMPIFLDEEEQRHLQALEREAEELFQQLQDSQVRMTQHLERMKDMYRELWETCHMPDVVLLQDVRNVSARTDLAQMQKPQPVNPELTSWCITGVLDMLNNFRVDSALSTEMIPCYISLSEDVRYVIFGDDHLSAPTDPQGVDSFAVWGAQAFTSGKHYWEVDVTLSSNWILGVCRDSRTADANFVIDSDERFFLISSKRSNHYSLSTNSPPLIQYVQRPLGRVGVFLDYDNGSVSFFDVSKGSLIYGFPPSSFSSPLRPFFCFGCT.

The segment at 15–56 (CCICVNYFIDPVTIDCGHSFCRPCLCLCSEEGRAPMRCPSCR) adopts an RING-type zinc-finger fold. The B box-type zinc finger occupies 87-128 (SSDNICVLHEETKELFCEADKRLLCGPCSESPEHMAHSHSPI). Residues Cys-92, His-95, Cys-114, and His-120 each coordinate Zn(2+). The stretch at 189 to 225 (LDEEEQRHLQALEREAEELFQQLQDSQVRMTQHLERM) forms a coiled coil. In terms of domain architecture, B30.2/SPRY spans 268-449 (ELTSWCITGV…LRPFFCFGCT (182 aa)).

This sequence belongs to the TRIM/RBCC family.

This is Tripartite motif-containing protein 64B (TRIM64B) from Homo sapiens (Human).